The sequence spans 96 residues: Putative membrane protein insertion efficiency factor (96 aa).

Belongs to the UPF0161 family.

The protein localises to the cell inner membrane. Functionally, could be involved in insertion of integral membrane proteins into the membrane. The chain is Putative membrane protein insertion efficiency factor from Borreliella afzelii (strain PKo) (Borrelia afzelii).